A 104-amino-acid polypeptide reads, in one-letter code: MTKSELMVRLAEVFAAKNGTHLLAKDVEYSVKVLVDTMTRSLARGQRIEIRGFGSFDLNHRPARIGRNPKTGERVEVPEKHVPHFKPGKELRERVDLALKENAN.

The protein belongs to the bacterial histone-like protein family. In terms of assembly, heterodimer of an alpha and a beta chain.

In terms of biological role, this protein is one of the two subunits of integration host factor, a specific DNA-binding protein that functions in genetic recombination as well as in transcriptional and translational control. This Neisseria gonorrhoeae protein is Integration host factor subunit beta (ihfB).